Reading from the N-terminus, the 360-residue chain is Phenylalanine--tRNA ligase alpha subunit (360 aa).

Glu260 is a binding site for Mg(2+).

The protein belongs to the class-II aminoacyl-tRNA synthetase family. Phe-tRNA synthetase alpha subunit type 1 subfamily. Tetramer of two alpha and two beta subunits. Mg(2+) is required as a cofactor.

It is found in the cytoplasm. The enzyme catalyses tRNA(Phe) + L-phenylalanine + ATP = L-phenylalanyl-tRNA(Phe) + AMP + diphosphate + H(+). The polypeptide is Phenylalanine--tRNA ligase alpha subunit (Rhizobium johnstonii (strain DSM 114642 / LMG 32736 / 3841) (Rhizobium leguminosarum bv. viciae)).